Consider the following 642-residue polypeptide: UvrABC system protein C (642 aa).

One can recognise a GIY-YIG domain in the interval 20-97 (ERCGVYRMFD…IKKFQPKFNI (78 aa)). Residues 207–242 (KELQENLSKKMEELSSQMRFEEAAEIRDRIKALSYV) enclose the UVR domain.

The protein belongs to the UvrC family. In terms of assembly, interacts with UvrB in an incision complex.

It is found in the cytoplasm. The UvrABC repair system catalyzes the recognition and processing of DNA lesions. UvrC both incises the 5' and 3' sides of the lesion. The N-terminal half is responsible for the 3' incision and the C-terminal half is responsible for the 5' incision. The protein is UvrABC system protein C of Rickettsia felis (strain ATCC VR-1525 / URRWXCal2) (Rickettsia azadi).